The primary structure comprises 47 residues: Defensin-2 (47 aa).

4 disulfide bridges follow: Cys3–Cys47, Cys14–Cys35, Cys20–Cys41, and Cys24–Cys43.

The protein belongs to the DEFL family. As to expression, epidermis and vascular bundles of pods, stems, roots, leaves and wet or dry seeds.

Functionally, possesses antifungal activity sensitive to inorganic cations. The polypeptide is Defensin-2 (Pisum sativum (Garden pea)).